Consider the following 81-residue polypeptide: Sulfur carrier protein TusA (81 aa).

Residue C20 is the Cysteine persulfide intermediate of the active site.

Belongs to the sulfur carrier protein TusA family.

Its subcellular location is the cytoplasm. Sulfur carrier protein which probably makes part of a sulfur-relay system. In Colwellia psychrerythraea (strain 34H / ATCC BAA-681) (Vibrio psychroerythus), this protein is Sulfur carrier protein TusA.